We begin with the raw amino-acid sequence, 194 residues long: CASP-like protein 1D1 (194 aa).

Over residues 1-16 (MGSDETKSTLDTERST) the composition is skewed to basic and acidic residues. The tract at residues 1 to 23 (MGSDETKSTLDTERSTVPRTGTT) is disordered. Residues 1-31 (MGSDETKSTLDTERSTVPRTGTTTKSCSITQ) are Cytoplasmic-facing. Residues 32–52 (VVLRFVLFAATLTSIVVMVTS) traverse the membrane as a helical segment. Topologically, residues 53 to 77 (KQTKNIFIPGTPIRIPAAKFTNSPA) are extracellular. The chain crosses the membrane as a helical span at residues 78 to 98 (LIYFVVALSVACFYSIVSTFV). The Cytoplasmic segment spans residues 99–109 (TVSAFKKHSCS). A helical membrane pass occupies residues 110–130 (AILLLNLAIMDAVMVGIVASA). Topologically, residues 131–163 (TGAGGGVAYLGLKGNKEVRWGKICNIYDKFCRH) are extracellular. Residues 164-184 (VGGAIAVSLFASVILLLLSII) form a helical membrane-spanning segment. The Cytoplasmic segment spans residues 185–194 (SVLSLYKKIR).

The protein belongs to the Casparian strip membrane proteins (CASP) family. In terms of assembly, homodimer and heterodimers.

It is found in the cell membrane. This is CASP-like protein 1D1 from Arabidopsis lyrata subsp. lyrata (Lyre-leaved rock-cress).